A 147-amino-acid polypeptide reads, in one-letter code: Vasopressin-neurophysin 2-copeptin (147 aa).

A disulfide bond links C1 and C6. G9 bears the Glycine amide mark. 7 cysteine pairs are disulfide-bonded: C22–C66, C25–C39, C33–C56, C40–C46, C73–C85, C79–C97, and C86–C91. N-linked (GlcNAc...) asparagine glycosylation is present at N114.

This sequence belongs to the vasopressin/oxytocin family. Interacts with vasopressin receptors V1bR/AVPR1B (Ki=85 pM), V1aR/AVPR1A (Ki=0.6 nM) and V2R/AVPR2 (Ki=4.9 nM). Interacts with oxytocin receptor (OXTR) (Ki=110 nM).

The protein localises to the secreted. Neurophysin 2 specifically binds vasopressin. In terms of biological role, vasopressin has a direct antidiuretic action on the kidney, it also causes vasoconstriction of the peripheral vessels. Acts by binding to vasopressin receptors (V1bR/AVPR1B, V1aR/AVPR1A, and V2R/AVPR2). The chain is Vasopressin-neurophysin 2-copeptin (AVP) from Ovis aries (Sheep).